A 295-amino-acid chain; its full sequence is Pyridoxal 5'-phosphate synthase subunit PdxS (295 aa).

Residue aspartate 25 coordinates D-ribose 5-phosphate. The active-site Schiff-base intermediate with D-ribose 5-phosphate is the lysine 82. Glycine 154 serves as a coordination point for D-ribose 5-phosphate. Arginine 166 serves as a coordination point for D-glyceraldehyde 3-phosphate. D-ribose 5-phosphate-binding positions include glycine 215 and glycine 236–serine 237.

The protein belongs to the PdxS/SNZ family. In the presence of PdxT, forms a dodecamer of heterodimers.

The catalysed reaction is aldehydo-D-ribose 5-phosphate + D-glyceraldehyde 3-phosphate + L-glutamine = pyridoxal 5'-phosphate + L-glutamate + phosphate + 3 H2O + H(+). It participates in cofactor biosynthesis; pyridoxal 5'-phosphate biosynthesis. Its function is as follows. Catalyzes the formation of pyridoxal 5'-phosphate from ribose 5-phosphate (RBP), glyceraldehyde 3-phosphate (G3P) and ammonia. The ammonia is provided by the PdxT subunit. Can also use ribulose 5-phosphate and dihydroxyacetone phosphate as substrates, resulting from enzyme-catalyzed isomerization of RBP and G3P, respectively. The sequence is that of Pyridoxal 5'-phosphate synthase subunit PdxS from Bacillus cereus (strain G9842).